The following is a 184-amino-acid chain: Jacalin-related lectin 2 (184 aa).

One can recognise a Jacalin-type lectin domain in the interval 4–163 (KIKIGPVGTD…LQNIGVYLQP (160 aa)).

It belongs to the jacalin lectin family.

The protein is Jacalin-related lectin 2 (JAL2) of Arabidopsis thaliana (Mouse-ear cress).